Consider the following 786-residue polypeptide: LPS-assembly protein LptD (786 aa).

Positions 1–39 (MPPKPLFPNVFPGDGAPRKRRLALALLAVPGLVPAVSYA) are cleaved as a signal peptide. A disordered region spans residues 767–786 (PGYTPLPPPPPPMSRFSNYE). The segment covering 770-779 (TPLPPPPPPM) has biased composition (pro residues).

Belongs to the LptD family. Component of the lipopolysaccharide transport and assembly complex. Interacts with LptE and LptA.

It localises to the cell outer membrane. In terms of biological role, together with LptE, is involved in the assembly of lipopolysaccharide (LPS) at the surface of the outer membrane. The chain is LPS-assembly protein LptD from Burkholderia cenocepacia (strain HI2424).